A 247-amino-acid polypeptide reads, in one-letter code: ATP synthase subunit a, chloroplastic (247 aa).

Transmembrane regions (helical) follow at residues 38–58, 95–115, 134–154, 199–219, and 220–240; these read QVLITSWVVITILLGSVIIAV, VPFIGTMFLFIFVSNWSGALL, INTTVALALLTSAAYFYAGLS, LVVVVLVSLVPLVVPIPVMFL, and GLFTSGIQALIFATLAAAYIG.

The protein belongs to the ATPase A chain family. As to quaternary structure, F-type ATPases have 2 components, CF(1) - the catalytic core - and CF(0) - the membrane proton channel. CF(1) has five subunits: alpha(3), beta(3), gamma(1), delta(1), epsilon(1). CF(0) has four main subunits: a, b, b' and c.

The protein localises to the plastid. The protein resides in the chloroplast thylakoid membrane. Functionally, key component of the proton channel; it plays a direct role in the translocation of protons across the membrane. The polypeptide is ATP synthase subunit a, chloroplastic (Zea mays (Maize)).